We begin with the raw amino-acid sequence, 405 residues long: Insertion element IS110 uncharacterized 43.6 kDa protein (405 aa).

The chain is Insertion element IS110 uncharacterized 43.6 kDa protein from Streptomyces coelicolor (strain ATCC BAA-471 / A3(2) / M145).